Here is a 600-residue protein sequence, read N- to C-terminus: Zinc finger and BTB domain-containing protein 46 (600 aa).

One can recognise a BTB domain in the interval 31–99; the sequence is CDACVVVEGK…MYSAHLALTS (69 aa). The disordered stretch occupies residues 173–222; that stretch reads RRTSPANSSGDSAIASCHEGGSSYGKEDQEPKADGPDDVSSQSLWPGDVG. Residues 197–207 are compositionally biased toward basic and acidic residues; that stretch reads GKEDQEPKADG. A Glycyl lysine isopeptide (Lys-Gly) (interchain with G-Cter in SUMO2) cross-link involves residue Lys229. At Ser234 the chain carries Phosphoserine. Positions 235 to 278 are disordered; the sequence is PSHYGGSELPSSKDTAIQNSLSEQGSGDGWQPTGRRKNRKNKET. The span at 243–259 shows a compositional bias: polar residues; it reads LPSSKDTAIQNSLSEQG. 2 C2H2-type zinc fingers span residues 418 to 436 and 446 to 468; these read FKCP…LKRH and YPCE…TLVH. The disordered stretch occupies residues 513-600; it reads LDHGGGGEGS…EPDKDFAWIS (88 aa). Residues 533-555 show a composition bias toward acidic residues; that stretch reads YLEDPDDPRGEAEEELVEDEDED. Composition is skewed to basic and acidic residues over residues 556–574 and 591–600; these read VAKW…LLGD and EPDKDFAWIS.

Post-translationally, sumoylated. Desumoylation by DESI1 reverses transcriptional repression activity.

It localises to the nucleus. Functionally, functions as a transcriptional repressor for PRDM1. The polypeptide is Zinc finger and BTB domain-containing protein 46 (Zbtb46) (Mus musculus (Mouse)).